The following is a 1182-amino-acid chain: Rho GTPase-activating protein 20 (1182 aa).

Positions 1–40 are disordered; sequence MEAMSPQQDALGAQPGRSSSLTGMSRIAGGPGTKKKMKTL. At Ser46 the chain carries Phosphoserine. The 101-residue stretch at 85 to 185 folds into the PH domain; it reads TLLIDGPVEL…WLSLLQRYIA (101 aa). A Ras-associating domain is found at 194 to 283; that stretch reads KSIPLKIFAK…TALLTQGSRD (90 aa). In terms of domain architecture, Rho-GAP spans 365–551; that stretch reads VSLPDLCEND…FLIENCCRVF (187 aa). Phosphoserine occurs at positions 704 and 730. 6 disordered regions span residues 745-772, 803-839, 935-955, 982-1011, 1074-1101, and 1142-1182; these read QTQPQKKGDKVCLKQSSVTGTDVSKRNT, VASYSHGSSQDHPRKQAFDADPCRFSPPHLTDAQKSS, SYSSLSSPGSSPSGSSVSSQD, TQRKQEELSSDFDSPSRLSGMPGPSMGQAS, LPSCASGTPEADSLQESQDDLQGDEGPG, and SGGQ…GTDI. Residues 758–772 show a composition bias toward polar residues; that stretch reads KQSSVTGTDVSKRNT. Over residues 811–824 the composition is skewed to basic and acidic residues; it reads SQDHPRKQAFDADP.

GTPase activator for the Rho-type GTPases by converting them to an inactive GDP-bound state. This chain is Rho GTPase-activating protein 20 (Arhgap20), found in Mus musculus (Mouse).